We begin with the raw amino-acid sequence, 498 residues long: Calcium uptake protein, mitochondrial (498 aa).

The transit peptide at 1–29 directs the protein to the mitochondrion; sequence MPALSHYRSVSSLPSVDRSFLLIQRLRIH. EF-hand domains are found at residues 216 to 241, 243 to 278, 329 to 364, and 437 to 472; these read EFFMLFDVDNDGLISFKEYIFFVTLL, IPESSFAVAFKMFDTDNNGEIDKEEFKTVMSLMRSQ, LTEEMLRLEFAHYDYKRRGSISAKDFALSMVAAADA, and LSDNVIEIAFHVFDSNQDGNLSVDEFLRVLHRRERD. Ca(2+) contacts are provided by D222, D224, D226, E233, D256, D258, N260, E262, and E267. 5 residues coordinate Ca(2+): D450, N452, D454, N456, and E461.

It belongs to the MICU1 family. MICU1 subfamily. In terms of tissue distribution, expressed in both green and non-green tissues, including roots, shoots, floral buds and pollen.

It is found in the mitochondrion inner membrane. The protein resides in the mitochondrion intermembrane space. Functionally, calcium-binding protein maintaining matrix calcium levels at low concentration. Regulates mitochondrial calcium dynamics in planta by restricting influx. The protein is Calcium uptake protein, mitochondrial of Arabidopsis thaliana (Mouse-ear cress).